The primary structure comprises 151 residues: Putative pre-16S rRNA nuclease (151 aa).

Belongs to the YqgF nuclease family.

It localises to the cytoplasm. Its function is as follows. Could be a nuclease involved in processing of the 5'-end of pre-16S rRNA. This is Putative pre-16S rRNA nuclease from Nitrosospira multiformis (strain ATCC 25196 / NCIMB 11849 / C 71).